The sequence spans 235 residues: Thrombin-like enzyme bilineobin (235 aa).

In terms of domain architecture, Peptidase S1 spans 1–227 (IIGGDECNIN…HLDWIQSIIA (227 aa)). Disulfide bonds link C7-C141, C28-C44, C78-C234, C120-C188, C152-C167, and C178-C203. The active-site Charge relay system is the H43. Residues N45, N57, and N81 are each glycosylated (N-linked (GlcNAc...) asparagine). D88 serves as the catalytic Charge relay system. Residues N132 and N148 are each glycosylated (N-linked (GlcNAc...) asparagine). S182 functions as the Charge relay system in the catalytic mechanism. N229 carries an N-linked (GlcNAc...) asparagine glycan.

Belongs to the peptidase S1 family. Snake venom subfamily. As to quaternary structure, monomer. Glycosylated. As to expression, expressed by the venom gland.

It is found in the secreted. Not inhibited by hirudin. Its function is as follows. Thrombin-like snake venom serine protease that has coagulant activity by releasing fibrinopeptides A and B from fibrinogen alpha (FGA) and beta (FGB), with a preference for beta chain. This chain is Thrombin-like enzyme bilineobin, found in Agkistrodon bilineatus (Cantil).